The following is a 345-amino-acid chain: Phenylalanine--tRNA ligase alpha subunit (345 aa).

E266 contributes to the Mg(2+) binding site.

It belongs to the class-II aminoacyl-tRNA synthetase family. Phe-tRNA synthetase alpha subunit type 1 subfamily. Tetramer of two alpha and two beta subunits. Requires Mg(2+) as cofactor.

The protein resides in the cytoplasm. The catalysed reaction is tRNA(Phe) + L-phenylalanine + ATP = L-phenylalanyl-tRNA(Phe) + AMP + diphosphate + H(+). This chain is Phenylalanine--tRNA ligase alpha subunit, found in Methylibium petroleiphilum (strain ATCC BAA-1232 / LMG 22953 / PM1).